We begin with the raw amino-acid sequence, 698 residues long: Elongation factor G (698 aa).

Residues 10–285 form the tr-type G domain; that stretch reads ASTRNIGIMA…AVVDFLPNPL (276 aa). Residues 19-26, 83-87, and 137-140 contribute to the GTP site; these read AHIDAGKT, DTPGH, and NKMD.

It belongs to the TRAFAC class translation factor GTPase superfamily. Classic translation factor GTPase family. EF-G/EF-2 subfamily.

Its subcellular location is the cytoplasm. Catalyzes the GTP-dependent ribosomal translocation step during translation elongation. During this step, the ribosome changes from the pre-translocational (PRE) to the post-translocational (POST) state as the newly formed A-site-bound peptidyl-tRNA and P-site-bound deacylated tRNA move to the P and E sites, respectively. Catalyzes the coordinated movement of the two tRNA molecules, the mRNA and conformational changes in the ribosome. The polypeptide is Elongation factor G (Frankia alni (strain DSM 45986 / CECT 9034 / ACN14a)).